We begin with the raw amino-acid sequence, 456 residues long: Bifunctional protein GlmU (456 aa).

The interval 1-229 is pyrophosphorylase; that stretch reads MLNSAMSVVI…LSEVEGVNNR (229 aa). UDP-N-acetyl-alpha-D-glucosamine-binding positions include 11 to 14, Lys25, Gln76, 81 to 82, 103 to 105, Gly140, Glu154, Asn169, and Asn227; these read LAAG, GT, and YGD. Asp105 is a Mg(2+) binding site. Residue Asn227 coordinates Mg(2+). The tract at residues 230–250 is linker; that stretch reads LQLSRLERVYQSEQAEKLLLA. Positions 251–456 are N-acetyltransferase; that stretch reads GVMLRDPARF…QGWQRPAKKK (206 aa). Positions 333 and 351 each coordinate UDP-N-acetyl-alpha-D-glucosamine. His363 functions as the Proton acceptor in the catalytic mechanism. Tyr366 and Asn377 together coordinate UDP-N-acetyl-alpha-D-glucosamine. Acetyl-CoA contacts are provided by residues Ala380, 386–387, Ser405, Ala423, and Arg440; that span reads NY.

It in the N-terminal section; belongs to the N-acetylglucosamine-1-phosphate uridyltransferase family. This sequence in the C-terminal section; belongs to the transferase hexapeptide repeat family. In terms of assembly, homotrimer. Mg(2+) is required as a cofactor.

It localises to the cytoplasm. It catalyses the reaction alpha-D-glucosamine 1-phosphate + acetyl-CoA = N-acetyl-alpha-D-glucosamine 1-phosphate + CoA + H(+). The catalysed reaction is N-acetyl-alpha-D-glucosamine 1-phosphate + UTP + H(+) = UDP-N-acetyl-alpha-D-glucosamine + diphosphate. Its pathway is nucleotide-sugar biosynthesis; UDP-N-acetyl-alpha-D-glucosamine biosynthesis; N-acetyl-alpha-D-glucosamine 1-phosphate from alpha-D-glucosamine 6-phosphate (route II): step 2/2. It participates in nucleotide-sugar biosynthesis; UDP-N-acetyl-alpha-D-glucosamine biosynthesis; UDP-N-acetyl-alpha-D-glucosamine from N-acetyl-alpha-D-glucosamine 1-phosphate: step 1/1. The protein operates within bacterial outer membrane biogenesis; LPS lipid A biosynthesis. Catalyzes the last two sequential reactions in the de novo biosynthetic pathway for UDP-N-acetylglucosamine (UDP-GlcNAc). The C-terminal domain catalyzes the transfer of acetyl group from acetyl coenzyme A to glucosamine-1-phosphate (GlcN-1-P) to produce N-acetylglucosamine-1-phosphate (GlcNAc-1-P), which is converted into UDP-GlcNAc by the transfer of uridine 5-monophosphate (from uridine 5-triphosphate), a reaction catalyzed by the N-terminal domain. This Citrobacter koseri (strain ATCC BAA-895 / CDC 4225-83 / SGSC4696) protein is Bifunctional protein GlmU.